A 556-amino-acid polypeptide reads, in one-letter code: Probable Xaa-Pro aminopeptidase SS1G_06948 (556 aa).

Residues aspartate 305, aspartate 316, glutamate 460, and glutamate 501 each coordinate Mn(2+).

The protein belongs to the peptidase M24B family. The cofactor is Mn(2+).

The catalysed reaction is Release of any N-terminal amino acid, including proline, that is linked to proline, even from a dipeptide or tripeptide.. In terms of biological role, catalyzes the removal of a penultimate prolyl residue from the N-termini of peptides. This Sclerotinia sclerotiorum (strain ATCC 18683 / 1980 / Ss-1) (White mold) protein is Probable Xaa-Pro aminopeptidase SS1G_06948.